A 301-amino-acid chain; its full sequence is GTPase Era (301 aa).

In terms of domain architecture, Era-type G spans 6 to 173; sequence KSGFVAIVGR…LEQTNANLEI (168 aa). The interval 14–21 is G1; sequence GRPNVGKS. Position 14–21 (14–21) interacts with GTP; that stretch reads GRPNVGKS. The G2 stretch occupies residues 40–44; that stretch reads QTTRN. The interval 61-64 is G3; the sequence is DTPG. GTP-binding positions include 61-65 and 123-126; these read DTPGI and NKID. The G4 stretch occupies residues 123 to 126; it reads NKID. The segment at 152–154 is G5; that stretch reads ISA. Positions 204 to 282 constitute a KH type-2 domain; sequence TREEVPHSVA…FLEIWVKVQK (79 aa).

It belongs to the TRAFAC class TrmE-Era-EngA-EngB-Septin-like GTPase superfamily. Era GTPase family. In terms of assembly, monomer.

Its subcellular location is the cytoplasm. The protein resides in the cell membrane. An essential GTPase that binds both GDP and GTP, with rapid nucleotide exchange. Plays a role in 16S rRNA processing and 30S ribosomal subunit biogenesis and possibly also in cell cycle regulation and energy metabolism. The protein is GTPase Era of Listeria welshimeri serovar 6b (strain ATCC 35897 / DSM 20650 / CCUG 15529 / CIP 8149 / NCTC 11857 / SLCC 5334 / V8).